We begin with the raw amino-acid sequence, 640 residues long: Large subunit GTPase 1 homolog (640 aa).

Positions W165–P426 constitute a CP-type G domain. Residue N213–D216 coordinates GTP. The interval A251–N341 is disordered. Composition is skewed to acidic residues over residues E253 to E270, E290 to D304, and E320 to P331. Polar residues predominate over residues E332 to N341. Residues G375–S382 and D419–G422 contribute to the GTP site. The interval G602–A640 is disordered. Positions P618–A640 are enriched in basic residues.

Belongs to the TRAFAC class YlqF/YawG GTPase family. LSG1 subfamily.

Its subcellular location is the cytoplasm. It is found in the endoplasmic reticulum. The protein resides in the nucleus. The protein localises to the cajal body. It carries out the reaction GTP + H2O = GDP + phosphate + H(+). In terms of biological role, functions as a GTPase. May act by mediating the release of NMD3 from the 60S ribosomal subunit after export into the cytoplasm during the 60S ribosomal subunit maturation. This chain is Large subunit GTPase 1 homolog, found in Danio rerio (Zebrafish).